Reading from the N-terminus, the 141-residue chain is ATP synthase epsilon chain (141 aa).

It belongs to the ATPase epsilon chain family. In terms of assembly, F-type ATPases have 2 components, CF(1) - the catalytic core - and CF(0) - the membrane proton channel. CF(1) has five subunits: alpha(3), beta(3), gamma(1), delta(1), epsilon(1). CF(0) has three main subunits: a, b and c.

Its subcellular location is the cell inner membrane. Functionally, produces ATP from ADP in the presence of a proton gradient across the membrane. The chain is ATP synthase epsilon chain from Bordetella avium (strain 197N).